A 337-amino-acid polypeptide reads, in one-letter code: DNA-directed RNA polymerase subunit alpha (337 aa).

The alpha N-terminal domain (alpha-NTD) stretch occupies residues 1-233 (MIQKNWQELI…DQLAIFVNFE (233 aa)). The alpha C-terminal domain (alpha-CTD) stretch occupies residues 249 to 337 (FNPALLKKVD…DLAKRYEDQY (89 aa)).

Belongs to the RNA polymerase alpha chain family. In terms of assembly, homodimer. The RNAP catalytic core consists of 2 alpha, 1 beta, 1 beta' and 1 omega subunit. When a sigma factor is associated with the core the holoenzyme is formed, which can initiate transcription.

It carries out the reaction RNA(n) + a ribonucleoside 5'-triphosphate = RNA(n+1) + diphosphate. DNA-dependent RNA polymerase catalyzes the transcription of DNA into RNA using the four ribonucleoside triphosphates as substrates. The polypeptide is DNA-directed RNA polymerase subunit alpha (Brucella anthropi (strain ATCC 49188 / DSM 6882 / CCUG 24695 / JCM 21032 / LMG 3331 / NBRC 15819 / NCTC 12168 / Alc 37) (Ochrobactrum anthropi)).